The following is a 623-amino-acid chain: uncharacterized protein (623 aa).

Residues 28 to 171 (TSAEVSQRVL…TIATLFAQVQ (144 aa)) enclose the GAF domain. A GGDEF domain is found at 212–345 (GPVAALFLDL…GGDSVAIFTA (134 aa)). The 256-residue stretch at 354–609 (RNDIELHLRR…AMRHMLSARR (256 aa)) folds into the EAL domain.

This is an uncharacterized protein from Mycobacterium tuberculosis (strain CDC 1551 / Oshkosh).